The following is a 193-amino-acid chain: Putative manganese efflux pump MntP (193 aa).

6 helical membrane-spanning segments follow: residues 3 to 23 (LATL…AALG), 39 to 59 (VGAY…ALGL), 65 to 85 (IAAF…GHMV), 113 to 133 (LALA…GLAV), 138 to 158 (ILMA…GGVL), and 173 to 193 (VLGG…HLSA).

This sequence belongs to the MntP (TC 9.B.29) family.

It localises to the cell inner membrane. Its function is as follows. Probably functions as a manganese efflux pump. In Rhodospirillum rubrum (strain ATCC 11170 / ATH 1.1.1 / DSM 467 / LMG 4362 / NCIMB 8255 / S1), this protein is Putative manganese efflux pump MntP.